The following is a 132-amino-acid chain: Small ribosomal subunit protein uS11 (132 aa).

Belongs to the universal ribosomal protein uS11 family. Part of the 30S ribosomal subunit. Interacts with proteins S7 and S18. Binds to IF-3.

Its function is as follows. Located on the platform of the 30S subunit, it bridges several disparate RNA helices of the 16S rRNA. Forms part of the Shine-Dalgarno cleft in the 70S ribosome. The polypeptide is Small ribosomal subunit protein uS11 (Legionella pneumophila (strain Paris)).